The chain runs to 1467 residues: Gag-Pol polyprotein (1467 aa).

A lipid anchor (N-myristoyl glycine; by host) is attached at Gly-2. The Nuclear export signal motif lies at Phe-16–Arg-22. The short motif at Lys-26 to Lys-32 is the Nuclear localization signal element. Residues Asn-116 to Asn-144 form a disordered region. CCHC-type zinc fingers lie at residues Val-402–Glu-419 and Met-423–Gly-440. The Peptidase A2 domain maps to Ile-535–Leu-606. Catalysis depends on Asp-540, which acts as the For protease activity; shared with dimeric partner. Positions Glu-662–Leu-852 constitute a Reverse transcriptase domain. Mg(2+)-binding residues include Asp-728, Asp-803, and Asp-804. The tract at residues Tyr-845–Trp-853 is RT 'primer grip'. A Tryptophan repeat motif motif is present at residues Trp-1015 to Trp-1031. The 124-residue stretch at Pro-1050–Arg-1173 folds into the RNase H type-1 domain. Asp-1114 and Asp-1165 together coordinate Mg(2+). The segment at Glu-1179–Gln-1220 adopts an Integrase-type zinc-finger fold. Zn(2+)-binding residues include His-1188, His-1192, Cys-1216, and Cys-1219. One can recognise an Integrase catalytic domain in the interval Val-1230 to Ile-1380. Mg(2+) contacts are provided by Asp-1240 and Asp-1292. Positions Phe-1399 to Asp-1446 form a DNA-binding region, integrase-type. Residues Tyr-1447–Asn-1467 are disordered.

Homotrimer. Interacts with gp41 (via C-terminus). In terms of assembly, homodimer. The active site consists of two apposed aspartic acid residues. As to quaternary structure, heterodimer of p66 RT and p51 RT (RT p66/p51). Heterodimerization of RT is essential for DNA polymerase activity. Despite the sequence identities, p66 RT and p51 RT have distinct folding. Homotetramer; may further associate as a homohexadecamer. Mg(2+) serves as cofactor. Specific enzymatic cleavages by the viral protease yield mature proteins. The protease is released by autocatalytic cleavage. The polyprotein is cleaved during and after budding, this process is termed maturation. Proteolytic cleavage of p66 RT removes the RNase H domain to yield the p51 RT subunit. In terms of processing, capsid protein p24 is phosphorylated.

Its subcellular location is the virion. The protein resides in the host nucleus. The protein localises to the host cytoplasm. It is found in the host cell membrane. It carries out the reaction Specific for a P1 residue that is hydrophobic, and P1' variable, but often Pro.. The catalysed reaction is Endohydrolysis of RNA in RNA/DNA hybrids. Three different cleavage modes: 1. sequence-specific internal cleavage of RNA. Human immunodeficiency virus type 1 and Moloney murine leukemia virus enzymes prefer to cleave the RNA strand one nucleotide away from the RNA-DNA junction. 2. RNA 5'-end directed cleavage 13-19 nucleotides from the RNA end. 3. DNA 3'-end directed cleavage 15-20 nucleotides away from the primer terminus.. It catalyses the reaction 3'-end directed exonucleolytic cleavage of viral RNA-DNA hybrid.. The enzyme catalyses DNA(n) + a 2'-deoxyribonucleoside 5'-triphosphate = DNA(n+1) + diphosphate. With respect to regulation, the viral protease is inhibited by many synthetic protease inhibitors (PIs), such as amprenavir, atazanavir, indinavir, loprinavir, nelfinavir, ritonavir and saquinavir. RT can be inhibited either by nucleoside RT inhibitors (NRTIs) or by non nucleoside RT inhibitors (NNRTIs). NRTIs act as chain terminators, whereas NNRTIs inhibit DNA polymerization by binding a small hydrophobic pocket near the RT active site and inducing an allosteric change in this region. Classical NRTIs are abacavir, adefovir (PMEA), didanosine (ddI), lamivudine (3TC), stavudine (d4T), tenofovir (PMPA), zalcitabine (ddC), and zidovudine (AZT). Classical NNRTIs are atevirdine (BHAP U-87201E), delavirdine, efavirenz (DMP-266), emivirine (I-EBU), and nevirapine (BI-RG-587). The tritherapies used as a basic effective treatment of AIDS associate two NRTIs and one NNRTI. Use of protease inhibitors in tritherapy regimens permit more ambitious therapeutic strategies. Its function is as follows. Gag-Pol polyprotein and Gag polyprotein may regulate their own translation, by the binding genomic RNA in the 5'-UTR. At low concentration, Gag-Pol and Gag would promote translation, whereas at high concentration, the polyproteins encapsidate genomic RNA and then shut off translation. Matrix protein p17 has two main functions: in infected cell, it targets Gag and Gag-pol polyproteins to the plasma membrane via a multipartite membrane-binding signal, that includes its myristointegration complex. The myristoylation signal and the NLS exert conflicting influences its subcellular localization. The key regulation of these motifs might be phosphorylation of a portion of MA molecules on the C-terminal tyrosine at the time of virus maturation, by virion-associated cellular tyrosine kinase. Implicated in the release from host cell mediated by Vpu. In terms of biological role, capsid protein p24 forms the conical core that encapsulates the genomic RNA-nucleocapsid complex in the virion. The core is constituted by capsid protein hexamer subunits. The core is disassembled soon after virion entry. Interaction with host PPIA/CYPA protects the virus from restriction by host TRIM5-alpha and from an unknown antiviral activity in host cells. This capsid restriction by TRIM5 is one of the factors which restricts SIV to the simian species. Functionally, nucleocapsid protein p7 encapsulates and protects viral dimeric unspliced (genomic) RNA. Binds these RNAs through its zinc fingers. Facilitates rearangement of nucleic acid secondary structure during retrotranscription of genomic RNA. This capability is referred to as nucleic acid chaperone activity. Its function is as follows. The aspartyl protease mediates proteolytic cleavages of Gag and Gag-Pol polyproteins during or shortly after the release of the virion from the plasma membrane. Cleavages take place as an ordered, step-wise cascade to yield mature proteins. This process is called maturation. Displays maximal activity during the budding process just prior to particle release from the cell. Also cleaves Nef and Vif, probably concomitantly with viral structural proteins on maturation of virus particles. Hydrolyzes host EIF4GI and PABP1 in order to shut off the capped cellular mRNA translation. The resulting inhibition of cellular protein synthesis serves to ensure maximal viral gene expression and to evade host immune response. Reverse transcriptase/ribonuclease H (RT) is a multifunctional enzyme that converts the viral dimeric RNA genome into dsDNA in the cytoplasm, shortly after virus entry into the cell. This enzyme displays a DNA polymerase activity that can copy either DNA or RNA templates, and a ribonuclease H (RNase H) activity that cleaves the RNA strand of RNA-DNA heteroduplexes in a partially processive 3' to 5' endonucleasic mode. Conversion of viral genomic RNA into dsDNA requires many steps. A tRNA binds to the primer-binding site (PBS) situated at the 5'-end of the viral RNA. RT uses the 3' end of the tRNA primer to perform a short round of RNA-dependent minus-strand DNA synthesis. The reading proceeds through the U5 region and ends after the repeated (R) region which is present at both ends of viral RNA. The portion of the RNA-DNA heteroduplex is digested by the RNase H, resulting in a ssDNA product attached to the tRNA primer. This ssDNA/tRNA hybridizes with the identical R region situated at the 3' end of viral RNA. This template exchange, known as minus-strand DNA strong stop transfer, can be either intra- or intermolecular. RT uses the 3' end of this newly synthesized short ssDNA to perform the RNA-dependent minus-strand DNA synthesis of the whole template. RNase H digests the RNA template except for two polypurine tracts (PPTs) situated at the 5'-end and near the center of the genome. It is not clear if both polymerase and RNase H activities are simultaneous. RNase H can probably proceed both in a polymerase-dependent (RNA cut into small fragments by the same RT performing DNA synthesis) and a polymerase-independent mode (cleavage of remaining RNA fragments by free RTs). Secondly, RT performs DNA-directed plus-strand DNA synthesis using the PPTs that have not been removed by RNase H as primers. PPTs and tRNA primers are then removed by RNase H. The 3' and 5' ssDNA PBS regions hybridize to form a circular dsDNA intermediate. Strand displacement synthesis by RT to the PBS and PPT ends produces a blunt ended, linear dsDNA copy of the viral genome that includes long terminal repeats (LTRs) at both ends. In terms of biological role, integrase catalyzes viral DNA integration into the host chromosome, by performing a series of DNA cutting and joining reactions. This enzyme activity takes place after virion entry into a cell and reverse transcription of the RNA genome in dsDNA. The first step in the integration process is 3' processing. This step requires a complex comprising the viral genome, matrix protein, Vpr and integrase. This complex is called the pre-integration complex (PIC). The integrase protein removes 2 nucleotides from each 3' end of the viral DNA, leaving recessed CA OH's at the 3' ends. In the second step, the PIC enters cell nucleus. This process is mediated through integrase and Vpr proteins, and allows the virus to infect a non dividing cell. This ability to enter the nucleus is specific of lentiviruses, other retroviruses cannot and rely on cell division to access cell chromosomes. In the third step, termed strand transfer, the integrase protein joins the previously processed 3' ends to the 5' ends of strands of target cellular DNA at the site of integration. The 5'-ends are produced by integrase-catalyzed staggered cuts, 5 bp apart. A Y-shaped, gapped, recombination intermediate results, with the 5'-ends of the viral DNA strands and the 3' ends of target DNA strands remaining unjoined, flanking a gap of 5 bp. The last step is viral DNA integration into host chromosome. This involves host DNA repair synthesis in which the 5 bp gaps between the unjoined strands are filled in and then ligated. Since this process occurs at both cuts flanking the SIV genome, a 5 bp duplication of host DNA is produced at the ends of SIV integration. Alternatively, Integrase may catalyze the excision of viral DNA just after strand transfer, this is termed disintegration. The sequence is that of Gag-Pol polyprotein (gag-pol) from Cercopithecidae (Old World monkeys).